The primary structure comprises 507 residues: RNA polymerase I-specific transcription initiation factor RRN11 (507 aa).

Residues 37-47 (KSTTTDSLPTP) are compositionally biased toward polar residues. Disordered regions lie at residues 37-76 (KSTT…LQQK) and 89-124 (GEIY…SDEE). Acidic residues predominate over residues 97-108 (SETDSQEEETEE). The span at 109-124 (GGEHDTGIDKEDSDEE) shows a compositional bias: basic and acidic residues.

Component of the core factor (CF) complex, which consists of RRN6, RRN7 and RRN11. The CF heterotrimer may further dimerize to form a hexamer. RRN11 interacts with RRN6, RRN7 and SPT15.

The protein resides in the nucleus. Its subcellular location is the nucleolus. Functionally, acts as a component of the core factor (CF) complex which is essential for the initiation of rDNA transcription by RNA polymerase I. After binding of UAF (upstream activation factor) to an upstream element of the promoter, CF is recruited in a SPT15/TBP-dependent manner to form a preinitiation complex. The polypeptide is RNA polymerase I-specific transcription initiation factor RRN11 (RRN11) (Saccharomyces cerevisiae (strain ATCC 204508 / S288c) (Baker's yeast)).